Reading from the N-terminus, the 329-residue chain is NADH-quinone oxidoreductase subunit H (329 aa).

Transmembrane regions (helical) follow at residues Ile-9–Val-29, Ile-79–Pro-99, Val-117–Gly-137, Val-162–Ile-182, Gly-188–Ala-208, Phe-243–Phe-263, Leu-269–Phe-289, and Trp-309–Leu-329.

The protein belongs to the complex I subunit 1 family. In terms of assembly, NDH-1 is composed of 14 different subunits. Subunits NuoA, H, J, K, L, M, N constitute the membrane sector of the complex.

The protein localises to the cell inner membrane. The enzyme catalyses a quinone + NADH + 5 H(+)(in) = a quinol + NAD(+) + 4 H(+)(out). Functionally, NDH-1 shuttles electrons from NADH, via FMN and iron-sulfur (Fe-S) centers, to quinones in the respiratory chain. The immediate electron acceptor for the enzyme in this species is believed to be ubiquinone. Couples the redox reaction to proton translocation (for every two electrons transferred, four hydrogen ions are translocated across the cytoplasmic membrane), and thus conserves the redox energy in a proton gradient. This subunit may bind ubiquinone. This Wolinella succinogenes (strain ATCC 29543 / DSM 1740 / CCUG 13145 / JCM 31913 / LMG 7466 / NCTC 11488 / FDC 602W) (Vibrio succinogenes) protein is NADH-quinone oxidoreductase subunit H.